The chain runs to 458 residues: Phosphoglucosamine mutase (458 aa).

The Phosphoserine intermediate role is filled by S106. Mg(2+)-binding residues include S106, D247, D249, and D251. Position 106 is a phosphoserine (S106).

This sequence belongs to the phosphohexose mutase family. Mg(2+) is required as a cofactor. Post-translationally, activated by phosphorylation.

It carries out the reaction alpha-D-glucosamine 1-phosphate = D-glucosamine 6-phosphate. Functionally, catalyzes the conversion of glucosamine-6-phosphate to glucosamine-1-phosphate. The protein is Phosphoglucosamine mutase of Chlamydia trachomatis serovar L2 (strain ATCC VR-902B / DSM 19102 / 434/Bu).